Reading from the N-terminus, the 358-residue chain is Tyrosinase ustQ (358 aa).

Asparagine 28 carries N-linked (GlcNAc...) asparagine glycosylation. The chain crosses the membrane as a helical span at residues phenylalanine 37–valine 57. N-linked (GlcNAc...) asparagine glycosylation is found at asparagine 91 and asparagine 109. Cu cation is bound by residues histidine 128 and histidine 137. Asparagine 172 and asparagine 214 each carry an N-linked (GlcNAc...) asparagine glycan. Positions 266, 270, and 292 each coordinate Cu cation. Residues asparagine 321 and asparagine 325 are each glycosylated (N-linked (GlcNAc...) asparagine).

This sequence belongs to the tyrosinase family. Cu(2+) serves as cofactor.

The protein resides in the membrane. It carries out the reaction 2 L-dopa + O2 = 2 L-dopaquinone + 2 H2O. The catalysed reaction is L-tyrosine + O2 = L-dopaquinone + H2O. It functions in the pathway mycotoxin biosynthesis. In terms of biological role, tyrosinase; part of the gene cluster that mediates the biosynthesis of the secondary metabolite ustiloxin B, an antimitotic tetrapeptide. First, ustA is processed by the subtilisin-like endoprotease Kex2 that is outside the ustiloxin B gene cluster, at the C-terminal side of Arg-Lys, after transfer to Golgi apparatus through the endoplasmic reticulum (ER). Cleavage by KEX2 generates 16 peptides YAIG-I to YAIG-XVI. To process the precursor peptide further, at least two peptidases are necessary to cleave the N-terminal and C-terminal sides of the Tyr-Ala-Ile-Gly core peptide which serves as backbone for the synthesis of ustiloxin B, through cyclization and modification of the tyrosine with a non-protein coding amino acid, norvaline. One of the two peptidases must be the serine peptidase ustP; and the other pepdidase is probably ustH. Macrocyclization of the core peptide derived from ustA requires the tyrosinase ustQ, as well as the homologous oxidases ustYa and ustYb, and leads to the production of the first cyclization product N-desmethylustiloxin F. For the formation of N-desmethylustiloxin F, three oxidation steps are required, hydroxylation at the benzylic position, hydroxylation at either the aromatic ring of Tyr or beta-position of Ile, and oxidative cyclization. UstQ may catalyze the oxidation of a phenol moiety, whereas the ustYa and ustYb are most likely responsible for the remaining two-step oxidations. N-desmethylustiloxin F is then methylated by ustM to yield ustiloxin F which in turn substrate of the cytochrome P450 monooxygenase ustC which catalyzes the formation of S-deoxyustiloxin H. The flavoprotein monooxygenases ustF1 and ustF2 then participate in the modification of the side chain of S-deoxyustiloxin H, leading to the synthesis of an oxime intermediate, via ustiloxin H. Finally, carboxylative dehydration performed by the cysteine desulfurase-like protein ustD yields ustiloxin B. The protein is Tyrosinase ustQ of Aspergillus flavus (strain ATCC 200026 / FGSC A1120 / IAM 13836 / NRRL 3357 / JCM 12722 / SRRC 167).